The chain runs to 340 residues: Glycerol-3-phosphate dehydrogenase [NAD(P)+] (340 aa).

NADPH-binding residues include S11, W12, R33, and K106. Positions 106, 137, and 139 each coordinate sn-glycerol 3-phosphate. A141 is an NADPH binding site. Sn-glycerol 3-phosphate-binding residues include K192, D245, S255, R256, and N257. Residue K192 is the Proton acceptor of the active site. R256 contributes to the NADPH binding site. NADPH contacts are provided by V280 and E282.

It belongs to the NAD-dependent glycerol-3-phosphate dehydrogenase family.

Its subcellular location is the cytoplasm. The catalysed reaction is sn-glycerol 3-phosphate + NAD(+) = dihydroxyacetone phosphate + NADH + H(+). The enzyme catalyses sn-glycerol 3-phosphate + NADP(+) = dihydroxyacetone phosphate + NADPH + H(+). It participates in membrane lipid metabolism; glycerophospholipid metabolism. Functionally, catalyzes the reduction of the glycolytic intermediate dihydroxyacetone phosphate (DHAP) to sn-glycerol 3-phosphate (G3P), the key precursor for phospholipid synthesis. In Bacillus mycoides (strain KBAB4) (Bacillus weihenstephanensis), this protein is Glycerol-3-phosphate dehydrogenase [NAD(P)+].